The sequence spans 434 residues: Alpha-enolase (434 aa).

Ser40 contributes to the Mg(2+) binding site. Residues His158 and Glu167 each contribute to the substrate site. Glu210 serves as the catalytic Proton donor. Residues Asp245, Glu293, and Asp318 each coordinate Mg(2+). Substrate is bound by residues Glu293 and Asp318. The active-site Proton acceptor is the Lys343. Substrate is bound by residues Ser370–Ser373 and Lys394.

This sequence belongs to the enolase family. In terms of assembly, homodimer. Mg(2+) serves as cofactor.

The protein resides in the cytoplasm. It catalyses the reaction (2R)-2-phosphoglycerate = phosphoenolpyruvate + H2O. It participates in carbohydrate degradation; glycolysis; pyruvate from D-glyceraldehyde 3-phosphate: step 4/5. This Xenopus laevis (African clawed frog) protein is Alpha-enolase (eno1).